A 198-amino-acid polypeptide reads, in one-letter code: Peptidyl-tRNA hydrolase (198 aa).

Tyrosine 14 contributes to the tRNA binding site. Histidine 19 acts as the Proton acceptor in catalysis. TRNA-binding residues include tyrosine 64, asparagine 66, and asparagine 112.

The protein belongs to the PTH family. In terms of assembly, monomer.

It localises to the cytoplasm. It catalyses the reaction an N-acyl-L-alpha-aminoacyl-tRNA + H2O = an N-acyl-L-amino acid + a tRNA + H(+). Hydrolyzes ribosome-free peptidyl-tRNAs (with 1 or more amino acids incorporated), which drop off the ribosome during protein synthesis, or as a result of ribosome stalling. Its function is as follows. Catalyzes the release of premature peptidyl moieties from peptidyl-tRNA molecules trapped in stalled 50S ribosomal subunits, and thus maintains levels of free tRNAs and 50S ribosomes. The sequence is that of Peptidyl-tRNA hydrolase from Beijerinckia indica subsp. indica (strain ATCC 9039 / DSM 1715 / NCIMB 8712).